A 393-amino-acid polypeptide reads, in one-letter code: Formate-dependent phosphoribosylglycinamide formyltransferase (393 aa).

Residues 22 to 23 (EL) and glutamate 82 each bind N(1)-(5-phospho-beta-D-ribosyl)glycinamide. ATP contacts are provided by residues arginine 114, lysine 155, 160 to 165 (SSGKGQ), 195 to 198 (EGFI), and glutamate 203. Residues 119–308 (RLAAEELDLP…QFALHARAIL (190 aa)) enclose the ATP-grasp domain. Mg(2+)-binding residues include glutamate 267 and glutamate 279. Residues aspartate 286, lysine 356, and 363 to 364 (RR) each bind N(1)-(5-phospho-beta-D-ribosyl)glycinamide.

The protein belongs to the PurK/PurT family. Homodimer.

It catalyses the reaction N(1)-(5-phospho-beta-D-ribosyl)glycinamide + formate + ATP = N(2)-formyl-N(1)-(5-phospho-beta-D-ribosyl)glycinamide + ADP + phosphate + H(+). The protein operates within purine metabolism; IMP biosynthesis via de novo pathway; N(2)-formyl-N(1)-(5-phospho-D-ribosyl)glycinamide from N(1)-(5-phospho-D-ribosyl)glycinamide (formate route): step 1/1. Functionally, involved in the de novo purine biosynthesis. Catalyzes the transfer of formate to 5-phospho-ribosyl-glycinamide (GAR), producing 5-phospho-ribosyl-N-formylglycinamide (FGAR). Formate is provided by PurU via hydrolysis of 10-formyl-tetrahydrofolate. The polypeptide is Formate-dependent phosphoribosylglycinamide formyltransferase (Pseudomonas fluorescens (strain ATCC BAA-477 / NRRL B-23932 / Pf-5)).